The following is a 405-amino-acid chain: Argininosuccinate synthase (405 aa).

ATP contacts are provided by residues 10–18 (AYSGGLDTS) and Ala37. L-citrulline-binding residues include Tyr88 and Ser93. An ATP-binding site is contributed by Gly118. 3 residues coordinate L-aspartate: Thr120, Asn124, and Asp125. Asn124 lines the L-citrulline pocket. L-citrulline is bound by residues Arg128, Ser179, Ser188, Glu264, and Tyr276.

It belongs to the argininosuccinate synthase family. Type 1 subfamily. As to quaternary structure, homotetramer.

The protein resides in the cytoplasm. It catalyses the reaction L-citrulline + L-aspartate + ATP = 2-(N(omega)-L-arginino)succinate + AMP + diphosphate + H(+). The protein operates within amino-acid biosynthesis; L-arginine biosynthesis; L-arginine from L-ornithine and carbamoyl phosphate: step 2/3. This Nitrosococcus oceani (strain ATCC 19707 / BCRC 17464 / JCM 30415 / NCIMB 11848 / C-107) protein is Argininosuccinate synthase.